A 164-amino-acid polypeptide reads, in one-letter code: UPF0304 protein PM1500 (164 aa).

The protein belongs to the UPF0304 family.

In Pasteurella multocida (strain Pm70), this protein is UPF0304 protein PM1500.